A 494-amino-acid chain; its full sequence is Lipopolysaccharide core galacturonosyltransferase RgtB (494 aa).

The next 10 helical transmembrane spans lie at 9–29 (ISWIFALLAAYFVLQVGVRLA), 74–94 (LTALSIVKNLLLFISYLLYGL), 104–124 (ALVAIATLGLLTIPQMAFEMQ), 127–147 (LTHTVAVFFSASIFFYGFIRS), 156–176 (YLIAGIGIGFGLLAKYNFAIL), 197–217 (WRLGLTAAVALVITLPHLFWL), 251–271 (LALAIISFAALTVAVFAIVFG), 291–311 (MMLVFLAGILLLIVFGGAAGI), 316–336 (LVPMLFILPLYFCLKIEAAGV), and 345–365 (FIPVVAVIMIGVPAALYGSVA).

Belongs to the glycosyltransferase 83 family.

It is found in the cell inner membrane. Its pathway is bacterial outer membrane biogenesis; LPS core biosynthesis. Its function is as follows. Involved in the modification of the lipopolysaccharide (LPS) inner core. Catalyzes the transfer of a galacturonic acid (GalA) residue to the 5-position of the outer Kdo (3-deoxy-D-manno-octulosonic acid) residue of the LPS inner core, using dodecaprenyl phosphate-GalA as the donor substrate. Acts after the other GalA transferase RgtA. The sequence is that of Lipopolysaccharide core galacturonosyltransferase RgtB from Rhizobium johnstonii (strain DSM 114642 / LMG 32736 / 3841) (Rhizobium leguminosarum bv. viciae).